A 210-amino-acid polypeptide reads, in one-letter code: Outer-membrane lipoprotein LolB (210 aa).

The signal sequence occupies residues 1-26; sequence MSKLKIDTKRRFSLLIALVLIISLSS. Residue Cys27 is the site of N-palmitoyl cysteine attachment. The S-diacylglycerol cysteine moiety is linked to residue Cys27.

Belongs to the LolB family. Monomer.

The protein resides in the cell outer membrane. Plays a critical role in the incorporation of lipoproteins in the outer membrane after they are released by the LolA protein. This Francisella tularensis subsp. novicida (strain U112) protein is Outer-membrane lipoprotein LolB.